The sequence spans 1124 residues: Phytochrome A1 (1124 aa).

Positions 1-14 (MSSSRPSQSSTTSA) are enriched in low complexity. Positions 1 to 20 (MSSSRPSQSSTTSARSKHSA) are disordered. In terms of domain architecture, GAF spans 218-401 (SMERLCDTMV…VFAIHVNKEL (184 aa)). Residue cysteine 323 participates in phytochromobilin binding. The 71-residue stretch at 617–687 (VTAEMVRLIE…KMLELALQGK (71 aa)) folds into the PAS 1 domain. The PAC domain maps to 690-746 (RNVEFEIKTHGPSGDSSPISLIVNACASRDVGDSVVGVCFIAQDITGQKNIMDKFTR). The PAS 2 domain occupies 747-821 (IEGDYRAIIQ…KNQEAFVNFG (75 aa)). Residues 901–1118 (YIRRQIRNPL…TFIISVELAV (218 aa)) form the Histidine kinase domain.

This sequence belongs to the phytochrome family. As to quaternary structure, homodimer. Contains one covalently linked phytochromobilin chromophore.

Functionally, regulatory photoreceptor which exists in two forms that are reversibly interconvertible by light: the Pr form that absorbs maximally in the red region of the spectrum and the Pfr form that absorbs maximally in the far-red region. Photoconversion of Pr to Pfr induces an array of morphogenic responses, whereas reconversion of Pfr to Pr cancels the induction of those responses. Pfr controls the expression of a number of nuclear genes including those encoding the small subunit of ribulose-bisphosphate carboxylase, chlorophyll A/B binding protein, protochlorophyllide reductase, rRNA, etc. It also controls the expression of its own gene(s) in a negative feedback fashion. In Nicotiana tabacum (Common tobacco), this protein is Phytochrome A1 (PHYA1).